The following is a 157-amino-acid chain: 2-C-methyl-D-erythritol 2,4-cyclodiphosphate synthase (157 aa).

A divalent metal cation is bound by residues Asp9 and His11. Residues 9–11 (DVH) and 35–36 (HS) each bind 4-CDP-2-C-methyl-D-erythritol 2-phosphate. Position 43 (His43) interacts with a divalent metal cation. Residues 57–59 (DIG), 62–66 (FPDTD), 101–107 (AEKPKMA), 133–136 (TTTE), Phe140, and Arg143 contribute to the 4-CDP-2-C-methyl-D-erythritol 2-phosphate site.

The protein belongs to the IspF family. As to quaternary structure, homotrimer. The cofactor is a divalent metal cation.

The catalysed reaction is 4-CDP-2-C-methyl-D-erythritol 2-phosphate = 2-C-methyl-D-erythritol 2,4-cyclic diphosphate + CMP. It functions in the pathway isoprenoid biosynthesis; isopentenyl diphosphate biosynthesis via DXP pathway; isopentenyl diphosphate from 1-deoxy-D-xylulose 5-phosphate: step 4/6. In terms of biological role, involved in the biosynthesis of isopentenyl diphosphate (IPP) and dimethylallyl diphosphate (DMAPP), two major building blocks of isoprenoid compounds. Catalyzes the conversion of 4-diphosphocytidyl-2-C-methyl-D-erythritol 2-phosphate (CDP-ME2P) to 2-C-methyl-D-erythritol 2,4-cyclodiphosphate (ME-CPP) with a corresponding release of cytidine 5-monophosphate (CMP). The chain is 2-C-methyl-D-erythritol 2,4-cyclodiphosphate synthase from Listeria monocytogenes serotype 4b (strain CLIP80459).